We begin with the raw amino-acid sequence, 717 residues long: Cleavage stimulation factor subunit 3 (717 aa).

Ser-2 is modified (N-acetylserine). HAT repeat units follow at residues 45 to 77 (QPID…AEIK), 79 to 110 (KNYD…YVRE), 117 to 152 (SYKE…FLKG), 163 to 196 (QRIT…YEEG), 221 to 261 (KEYE…WEKS), 271 to 303 (LITK…YLEQ), 319 to 352 (LFSD…YEES), 354 to 387 (MKYE…FARR), and 458 to 494 (NEDN…FESN). The disordered stretch occupies residues 684–705 (VKRPNEDSDEDEEKGAVVPPVH). The residue at position 691 (Ser-691) is a Phosphoserine.

Homodimer. The CSTF complex is composed of CSTF1 (50 kDa subunit), CSTF2 (64 kDa subunit) and CSTF3 (77 kDa subunit). CSTF3 directly interacts with CSTF1 and CSTF2. Interacts with FIP1L1.

Its subcellular location is the nucleus. One of the multiple factors required for polyadenylation and 3'-end cleavage of mammalian pre-mRNAs. This is Cleavage stimulation factor subunit 3 (CSTF3) from Homo sapiens (Human).